The primary structure comprises 245 residues: uncharacterized protein (245 aa).

The signal sequence occupies residues 1–18 (MKSAAILALLAQALAVTA). Residues 21 to 66 (VEGDRTPGTRTLDLPNFPGGSVPTRGVEKRADLPPDNGGGNAPDPD) are disordered. 2 N-linked (GlcNAc...) asparagine glycosylation sites follow: N189 and N225.

Its subcellular location is the secreted. This is an uncharacterized protein from Arthroderma benhamiae (strain ATCC MYA-4681 / CBS 112371) (Trichophyton mentagrophytes).